The following is a 210-amino-acid chain: Large ribosomal subunit protein uL3 (210 aa).

The tract at residues 126–152 is disordered; it reads HGFRGGPKTHGQSDRHRAPGSIGAGTT.

It belongs to the universal ribosomal protein uL3 family. As to quaternary structure, part of the 50S ribosomal subunit. Forms a cluster with proteins L14 and L19.

Its function is as follows. One of the primary rRNA binding proteins, it binds directly near the 3'-end of the 23S rRNA, where it nucleates assembly of the 50S subunit. The sequence is that of Large ribosomal subunit protein uL3 from Chloroflexus aurantiacus (strain ATCC 29366 / DSM 635 / J-10-fl).